The primary structure comprises 512 residues: NAD(P)H-quinone oxidoreductase chain 4, chloroplastic (512 aa).

14 consecutive transmembrane segments (helical) span residues 4–24, 34–54, 87–107, 111–131, 134–154, 167–187, 210–230, 241–261, 273–293, 312–332, 333–353, 373–395, 416–436, and 462–482; these read LPWLTIIVLFPILAGLLIPFI, WYALGVGILDFLLITYIFGYH, MPLVLLTGFVTTLAILGAWPV, AKLFYFLMLAMYSGQIGVFVS, LLLFFFMWELELIPVYLLLLV, FILYTAIGSIFILLAGLTMAF, ILLYIGFLIAYAVKLPAFPLH, HYSTCMLLAGILLKMGGYALI, LIFAPFLIIIGVINIIYAALT, MGFVLIGIGSLTNLGLSGAVL, QMISHGLIGASLFFLAGTTYD, TFAMFTTCSLASLALPGMSGFVA, IITFLEGIGIILTPIYLLSML, and IFVITCLVLPILGIGIYPKMA.

Belongs to the complex I subunit 4 family.

The protein localises to the plastid. The protein resides in the chloroplast thylakoid membrane. The enzyme catalyses a plastoquinone + NADH + (n+1) H(+)(in) = a plastoquinol + NAD(+) + n H(+)(out). It carries out the reaction a plastoquinone + NADPH + (n+1) H(+)(in) = a plastoquinol + NADP(+) + n H(+)(out). In Chlorokybus atmophyticus (Soil alga), this protein is NAD(P)H-quinone oxidoreductase chain 4, chloroplastic.